The following is a 131-amino-acid chain: uncharacterized protein (131 aa).

Residues 64 to 81 form a CCHC-type; degenerate zinc finger; it reads VNCDKCGKPGNVKNDCPG.

This is an uncharacterized protein from Homo sapiens (Human).